Reading from the N-terminus, the 363-residue chain is Dihydroorotate dehydrogenase (quinone) (363 aa).

FMN contacts are provided by residues 67–71 (AGLDK) and Thr91. Lys71 serves as a coordination point for substrate. Position 116-120 (116-120 (NRMGF)) interacts with substrate. FMN is bound by residues Asn145 and Asn178. Asn178 is a substrate binding site. Ser181 serves as the catalytic Nucleophile. Asn183 serves as a coordination point for substrate. Residues Lys219 and Thr247 each contribute to the FMN site. 248–249 (NT) provides a ligand contact to substrate. FMN-binding positions include Gly268, Gly297, and 318–319 (YT).

It belongs to the dihydroorotate dehydrogenase family. Type 2 subfamily. As to quaternary structure, monomer. The cofactor is FMN.

Its subcellular location is the cell membrane. The catalysed reaction is (S)-dihydroorotate + a quinone = orotate + a quinol. It functions in the pathway pyrimidine metabolism; UMP biosynthesis via de novo pathway; orotate from (S)-dihydroorotate (quinone route): step 1/1. In terms of biological role, catalyzes the conversion of dihydroorotate to orotate with quinone as electron acceptor. The protein is Dihydroorotate dehydrogenase (quinone) of Myxococcus xanthus (strain DK1622).